We begin with the raw amino-acid sequence, 561 residues long: DNA ligase (561 aa).

Glu-249 provides a ligand contact to ATP. Lys-251 (N6-AMP-lysine intermediate) is an active-site residue. Positions 256, 271, 301, 340, 417, and 423 each coordinate ATP.

It belongs to the ATP-dependent DNA ligase family. The cofactor is Mg(2+).

The enzyme catalyses ATP + (deoxyribonucleotide)n-3'-hydroxyl + 5'-phospho-(deoxyribonucleotide)m = (deoxyribonucleotide)n+m + AMP + diphosphate.. Its function is as follows. DNA ligase that seals nicks in double-stranded DNA during DNA replication, DNA recombination and DNA repair. This is DNA ligase from Methanothermobacter thermautotrophicus (strain ATCC 29096 / DSM 1053 / JCM 10044 / NBRC 100330 / Delta H) (Methanobacterium thermoautotrophicum).